Here is a 258-residue protein sequence, read N- to C-terminus: Pimeloyl-[acyl-carrier protein] methyl ester esterase (258 aa).

The region spanning 16–241 is the AB hydrolase-1 domain; the sequence is LVLLHGWGLN…GSAHAPFVSH (226 aa). Residues tryptophan 22, 82-83, and 143-147 each bind substrate; these read SM and FLALQ. Serine 82 (nucleophile) is an active-site residue. Active-site residues include aspartate 207 and histidine 235. Histidine 235 is a substrate binding site.

The protein belongs to the AB hydrolase superfamily. Carboxylesterase BioH family. In terms of assembly, monomer.

The protein localises to the cytoplasm. The enzyme catalyses 6-carboxyhexanoyl-[ACP] methyl ester + H2O = 6-carboxyhexanoyl-[ACP] + methanol + H(+). The protein operates within cofactor biosynthesis; biotin biosynthesis. The physiological role of BioH is to remove the methyl group introduced by BioC when the pimeloyl moiety is complete. It allows to synthesize pimeloyl-ACP via the fatty acid synthetic pathway through the hydrolysis of the ester bonds of pimeloyl-ACP esters. This is Pimeloyl-[acyl-carrier protein] methyl ester esterase from Yersinia enterocolitica serotype O:8 / biotype 1B (strain NCTC 13174 / 8081).